We begin with the raw amino-acid sequence, 429 residues long: Glucose-1-phosphate adenylyltransferase (429 aa).

Alpha-D-glucose 1-phosphate contacts are provided by residues G162, 177-178 (EK), and S209.

Belongs to the bacterial/plant glucose-1-phosphate adenylyltransferase family. As to quaternary structure, homotetramer.

The enzyme catalyses alpha-D-glucose 1-phosphate + ATP + H(+) = ADP-alpha-D-glucose + diphosphate. It functions in the pathway glycan biosynthesis; glycogen biosynthesis. In terms of biological role, involved in the biosynthesis of ADP-glucose, a building block required for the elongation reactions to produce glycogen. Catalyzes the reaction between ATP and alpha-D-glucose 1-phosphate (G1P) to produce pyrophosphate and ADP-Glc. The chain is Glucose-1-phosphate adenylyltransferase from Gloeothece citriformis (strain PCC 7424) (Cyanothece sp. (strain PCC 7424)).